A 414-amino-acid polypeptide reads, in one-letter code: 3-phosphoshikimate 1-carboxyvinyltransferase (414 aa).

3-phosphoshikimate contacts are provided by lysine 20, serine 21, and arginine 25. Lysine 20 lines the phosphoenolpyruvate pocket. Phosphoenolpyruvate is bound by residues glycine 88 and arginine 116. The 3-phosphoshikimate site is built by threonine 157, serine 158, glutamine 159, serine 183, aspartate 297, and lysine 324. A phosphoenolpyruvate-binding site is contributed by glutamine 159. The active-site Proton acceptor is aspartate 297. Phosphoenolpyruvate is bound by residues arginine 328, arginine 369, and lysine 395.

The protein belongs to the EPSP synthase family. In terms of assembly, monomer.

The protein resides in the cytoplasm. The enzyme catalyses 3-phosphoshikimate + phosphoenolpyruvate = 5-O-(1-carboxyvinyl)-3-phosphoshikimate + phosphate. It functions in the pathway metabolic intermediate biosynthesis; chorismate biosynthesis. Catalyzes the transfer of the enolpyruvyl moiety of phosphoenolpyruvate (PEP) to the 5-hydroxyl of shikimate-3-phosphate (S3P) to produce enolpyruvyl shikimate-3-phosphate and inorganic phosphate. This Caldivirga maquilingensis (strain ATCC 700844 / DSM 13496 / JCM 10307 / IC-167) protein is 3-phosphoshikimate 1-carboxyvinyltransferase.